The chain runs to 399 residues: Brefeldin A resistance protein (399 aa).

Composition is skewed to basic and acidic residues over residues 1 to 31 (MTSKMENNKDESISTKNALEEKSNETKDETS), 49 to 69 (SKSEPLEDKGNAEVKEFKETT), and 101 to 130 (KVEEKELKVNKDVDENEGHVAVETGKKESA). Disordered regions lie at residues 1-173 (MTSK…FGAF) and 191-269 (KKFA…SEII). A compositionally biased stretch (low complexity) spans 138 to 157 (SPFSQFASFSNASSPFSNVS). 2 stretches are compositionally biased toward basic and acidic residues: residues 205 to 217 (SGKEKENDKKSSE) and 241 to 252 (TKSEPKEADKGS). Over residues 253–263 (GDSTKSTMHQL) the composition is skewed to polar residues. A RanBD1 domain is found at 256-396 (TKSTMHQLSD…VLEAIPKGGR (141 aa)).

Post-translationally, phosphorylated.

The protein resides in the nucleus. In Schizosaccharomyces pombe (strain 972 / ATCC 24843) (Fission yeast), this protein is Brefeldin A resistance protein (hba1).